The chain runs to 425 residues: UDP-N-acetyl-D-glucosamine 6-dehydrogenase (425 aa).

Residues Val17, Asp35, Arg40, Thr86, and Thr121 each contribute to the NAD(+) site. Cys261 (nucleophile) is an active-site residue. Arg332 contacts NAD(+).

Belongs to the UDP-glucose/GDP-mannose dehydrogenase family. As to quaternary structure, homotrimer.

The enzyme catalyses UDP-N-acetyl-alpha-D-glucosamine + 2 NAD(+) + H2O = UDP-2-acetamido-2-deoxy-alpha-D-glucuronate + 2 NADH + 3 H(+). Its pathway is capsule biogenesis; capsule polysaccharide biosynthesis. It functions in the pathway glycan metabolism; Vi-antigen biosynthesis. Dehydrogenase required for the biosynthesis of the capsular polysaccharide, commonly referred as the Vi antigen, an important virulence factor. Catalyzes the conversion of UDP-N-acetylglucosamine (UDP-GlcNAc) to UDP-N-acetylglucosaminuronic acid (UDP-GlcNAcA). Cannot use UDP-GalNAc, UDP-Glc and UDP-Gal as substrates. The sequence is that of UDP-N-acetyl-D-glucosamine 6-dehydrogenase from Salmonella typhi.